A 728-amino-acid chain; its full sequence is 1,4-alpha-glucan branching enzyme GlgB (728 aa).

The active-site Nucleophile is the aspartate 405. Glutamate 458 functions as the Proton donor in the catalytic mechanism.

This sequence belongs to the glycosyl hydrolase 13 family. GlgB subfamily. Monomer.

It catalyses the reaction Transfers a segment of a (1-&gt;4)-alpha-D-glucan chain to a primary hydroxy group in a similar glucan chain.. It functions in the pathway glycan biosynthesis; glycogen biosynthesis. Catalyzes the formation of the alpha-1,6-glucosidic linkages in glycogen by scission of a 1,4-alpha-linked oligosaccharide from growing alpha-1,4-glucan chains and the subsequent attachment of the oligosaccharide to the alpha-1,6 position. The polypeptide is 1,4-alpha-glucan branching enzyme GlgB (Escherichia coli O1:K1 / APEC).